A 135-amino-acid polypeptide reads, in one-letter code: Hemoglobin subunit beta-2 (135 aa).

The Globin domain maps to 2–135 (HWTAEEKALV…VVDALSKGYH (134 aa)). Residues His57 and His81 each coordinate heme b.

The protein belongs to the globin family. As to quaternary structure, hb 2 is a heterotetramer of two alpha and two beta-2 chains. Red blood cells (at protein level).

Its function is as follows. Involved in oxygen transport from gills to the various peripheral tissues. The sequence is that of Hemoglobin subunit beta-2 from Somniosus microcephalus (Greenland sleeper shark).